Consider the following 334-residue polypeptide: Protein-glutamate methylesterase FrzG (334 aa).

Residues 147–334 form the CheB-type methylesterase domain; that stretch reads PYPLVAIAAS…AALMQWVDVC (188 aa). Catalysis depends on residues Ser156, His183, and Asp276.

It carries out the reaction [protein]-L-glutamate 5-O-methyl ester + H2O = L-glutamyl-[protein] + methanol + H(+). In terms of biological role, probable methylesterase. Required for the normal aggregation of M.xanthus cells during fruiting body formation. It is also a component of a sensory transduction pathway that controls the frequency at which cells reverse their gliding direction. It may remove the methyl group from the gamma-glutamyl methyl ester residues in FrzCD. In Myxococcus xanthus, this protein is Protein-glutamate methylesterase FrzG (frzG).